We begin with the raw amino-acid sequence, 231 residues long: ATP-dependent dethiobiotin synthetase BioD 2 (231 aa).

An ATP-binding site is contributed by 13–18; the sequence is SVGKTV. Threonine 17 lines the Mg(2+) pocket. Lysine 38 is a catalytic residue. Residues aspartate 55, 112 to 115, 172 to 173, 201 to 203, and glutamine 208 contribute to the ATP site; these read EGTG, NR, and PYL. Residues aspartate 55 and glutamate 112 each coordinate Mg(2+).

The protein belongs to the dethiobiotin synthetase family. As to quaternary structure, homodimer. It depends on Mg(2+) as a cofactor.

The protein localises to the cytoplasm. It catalyses the reaction (7R,8S)-7,8-diammoniononanoate + CO2 + ATP = (4R,5S)-dethiobiotin + ADP + phosphate + 3 H(+). It participates in cofactor biosynthesis; biotin biosynthesis; biotin from 7,8-diaminononanoate: step 1/2. Functionally, catalyzes a mechanistically unusual reaction, the ATP-dependent insertion of CO2 between the N7 and N8 nitrogen atoms of 7,8-diaminopelargonic acid (DAPA, also called 7,8-diammoniononanoate) to form a ureido ring. The chain is ATP-dependent dethiobiotin synthetase BioD 2 from Salmonella typhimurium (strain LT2 / SGSC1412 / ATCC 700720).